Here is a 202-residue protein sequence, read N- to C-terminus: UPF0126 membrane protein YvgT (202 aa).

Helical transmembrane passes span 3-23 (WELL…IVAM), 26-46 (EYDI…GGAI), 63-83 (AYFQ…KLLL), 90-110 (GNLS…LYAV), 113-133 (GHPL…GGII), and 160-180 (IVGL…FVLV).

The protein belongs to the UPF0126 family.

Its subcellular location is the cell membrane. The sequence is that of UPF0126 membrane protein YvgT (yvgT) from Bacillus subtilis (strain 168).